The primary structure comprises 398 residues: Nonsense-mediated decay protein 4 (398 aa).

Residues 327–355 (PVTSNYRGKNNRGRNNRGRRGNKRRERER) are disordered. The segment covering 335-350 (KNNRGRNNRGRRGNKR) has biased composition (basic residues).

Its subcellular location is the cytoplasm. Its function is as follows. Involved in nonsense-mediated decay of mRNAs containing premature stop codons. In Candida albicans (strain SC5314 / ATCC MYA-2876) (Yeast), this protein is Nonsense-mediated decay protein 4 (NMD4).